The primary structure comprises 647 residues: Threonine--tRNA ligase (647 aa).

The region spanning 1–61 (MINITFPDGA…TEDGSIEIVT (61 aa)) is the TGS domain. Residues 242–540 (DHRKLGKELD…LIENYKGAFP (299 aa)) are catalytic. Cys-336, His-387, and His-517 together coordinate Zn(2+).

The protein belongs to the class-II aminoacyl-tRNA synthetase family. Homodimer. Requires Zn(2+) as cofactor.

Its subcellular location is the cytoplasm. It carries out the reaction tRNA(Thr) + L-threonine + ATP = L-threonyl-tRNA(Thr) + AMP + diphosphate + H(+). In terms of biological role, catalyzes the attachment of threonine to tRNA(Thr) in a two-step reaction: L-threonine is first activated by ATP to form Thr-AMP and then transferred to the acceptor end of tRNA(Thr). Also edits incorrectly charged L-seryl-tRNA(Thr). This is Threonine--tRNA ligase from Streptococcus pneumoniae (strain 70585).